A 152-amino-acid chain; its full sequence is Lipoprotein signal peptidase (152 aa).

2 helical membrane passes run 55-75 (NKMW…VFYM) and 85-105 (LGIS…DRVF). Active-site residues include aspartate 111 and aspartate 129. A helical membrane pass occupies residues 124–144 (VFNIADSALCIGVVLIIIQTV).

It belongs to the peptidase A8 family.

The protein localises to the cell membrane. The enzyme catalyses Release of signal peptides from bacterial membrane prolipoproteins. Hydrolyzes -Xaa-Yaa-Zaa-|-(S,diacylglyceryl)Cys-, in which Xaa is hydrophobic (preferably Leu), and Yaa (Ala or Ser) and Zaa (Gly or Ala) have small, neutral side chains.. It participates in protein modification; lipoprotein biosynthesis (signal peptide cleavage). This protein specifically catalyzes the removal of signal peptides from prolipoproteins. In Bacillus mycoides (strain KBAB4) (Bacillus weihenstephanensis), this protein is Lipoprotein signal peptidase.